The primary structure comprises 128 residues: Large ribosomal subunit protein mL51 (128 aa).

The transit peptide at 1 to 31 (MAGNLLSGAGRRLWDWVPLACRSFSLGVPRL) directs the protein to the mitochondrion.

It belongs to the mitochondrion-specific ribosomal protein mL51 family. Component of the mitochondrial large ribosomal subunit (mt-LSU). Mature mammalian 55S mitochondrial ribosomes consist of a small (28S) and a large (39S) subunit. The 28S small subunit contains a 12S ribosomal RNA (12S mt-rRNA) and 30 different proteins. The 39S large subunit contains a 16S rRNA (16S mt-rRNA), a copy of mitochondrial valine transfer RNA (mt-tRNA(Val)), which plays an integral structural role, and 52 different proteins. Interacts with OXA1L.

Its subcellular location is the mitochondrion. This is Large ribosomal subunit protein mL51 (MRPL51) from Homo sapiens (Human).